The chain runs to 478 residues: D-ribulose kinase (478 aa).

The N-terminal 38 residues, 1–38 (MLILRQFQISSFELFQSPKQTGFYSSSRSVPLPRTRFY), are a transit peptide targeting the chloroplast. Residues Asp60, 64 to 67 (SGGR), and Asp278 each bind substrate. ATP-binding positions include Ser300, Gly338, and 433–437 (GGAKN).

Belongs to the FGGY kinase family. Requires a divalent metal cation as cofactor.

Its subcellular location is the plastid. The protein localises to the chloroplast. The enzyme catalyses D-ribulose + ATP = D-ribulose 5-phosphate + ADP + H(+). Functionally, exhibits ATP hydrolysis without substrate. Can phosphorylate D-ribulose with low efficiency. This Arabidopsis thaliana (Mouse-ear cress) protein is D-ribulose kinase.